Reading from the N-terminus, the 626-residue chain is 4-hydroxy-3-methylbut-2-en-1-yl diphosphate synthase (flavodoxin) (626 aa).

Residues Cys-521, Cys-524, Cys-555, and Glu-562 each contribute to the [4Fe-4S] cluster site.

This sequence belongs to the IspG family. The cofactor is [4Fe-4S] cluster.

It catalyses the reaction (2E)-4-hydroxy-3-methylbut-2-enyl diphosphate + oxidized [flavodoxin] + H2O + 2 H(+) = 2-C-methyl-D-erythritol 2,4-cyclic diphosphate + reduced [flavodoxin]. It functions in the pathway isoprenoid biosynthesis; isopentenyl diphosphate biosynthesis via DXP pathway; isopentenyl diphosphate from 1-deoxy-D-xylulose 5-phosphate: step 5/6. Its function is as follows. Converts 2C-methyl-D-erythritol 2,4-cyclodiphosphate (ME-2,4cPP) into 1-hydroxy-2-methyl-2-(E)-butenyl 4-diphosphate. The protein is 4-hydroxy-3-methylbut-2-en-1-yl diphosphate synthase (flavodoxin) of Bacteroides fragilis (strain ATCC 25285 / DSM 2151 / CCUG 4856 / JCM 11019 / LMG 10263 / NCTC 9343 / Onslow / VPI 2553 / EN-2).